Here is a 339-residue protein sequence, read N- to C-terminus: Ketol-acid reductoisomerase (NADP(+)) (339 aa).

The region spanning 1-182 (MRVYYDRDAD…GGGRAGIIET (182 aa)) is the KARI N-terminal Rossmann domain. NADP(+) is bound by residues 24 to 27 (YGSQ), Arg48, Ser51, Thr53, and 83 to 86 (DELQ). Residue His108 is part of the active site. Gly134 is a binding site for NADP(+). The KARI C-terminal knotted domain maps to 183 to 328 (TFKEECETDL…AKLRGMMPWI (146 aa)). Mg(2+)-binding residues include Asp191, Glu195, Glu227, and Glu231. Ser252 lines the substrate pocket.

This sequence belongs to the ketol-acid reductoisomerase family. Mg(2+) is required as a cofactor.

The enzyme catalyses (2R)-2,3-dihydroxy-3-methylbutanoate + NADP(+) = (2S)-2-acetolactate + NADPH + H(+). It catalyses the reaction (2R,3R)-2,3-dihydroxy-3-methylpentanoate + NADP(+) = (S)-2-ethyl-2-hydroxy-3-oxobutanoate + NADPH + H(+). It functions in the pathway amino-acid biosynthesis; L-isoleucine biosynthesis; L-isoleucine from 2-oxobutanoate: step 2/4. It participates in amino-acid biosynthesis; L-valine biosynthesis; L-valine from pyruvate: step 2/4. Its function is as follows. Involved in the biosynthesis of branched-chain amino acids (BCAA). Catalyzes an alkyl-migration followed by a ketol-acid reduction of (S)-2-acetolactate (S2AL) to yield (R)-2,3-dihydroxy-isovalerate. In the isomerase reaction, S2AL is rearranged via a Mg-dependent methyl migration to produce 3-hydroxy-3-methyl-2-ketobutyrate (HMKB). In the reductase reaction, this 2-ketoacid undergoes a metal-dependent reduction by NADPH to yield (R)-2,3-dihydroxy-isovalerate. The polypeptide is Ketol-acid reductoisomerase (NADP(+)) (Methylorubrum populi (strain ATCC BAA-705 / NCIMB 13946 / BJ001) (Methylobacterium populi)).